Reading from the N-terminus, the 898-residue chain is Tight junction protein ZO-3 (898 aa).

In terms of domain architecture, PDZ 1 spans 11–93 (TATLCRDPRR…LANITVKRPR (83 aa)). The disordered stretch occupies residues 98–165 (PATKAGTSGR…SPGGNSEANG (68 aa)). Serine 128, serine 156, serine 161, serine 195, and serine 313 each carry phosphoserine. Positions 187–264 (SVLVRRTESE…KLTLLVLRDR (78 aa)) constitute a PDZ 2 domain. The disordered stretch occupies residues 295–368 (LSQAVPSHVP…QSAEDRGYSP (74 aa)). Over residues 312 to 349 (RSLDSDGTDSPRDSPPLRRENSLDSRTISEPDAPRHSS) the composition is skewed to basic and acidic residues. The residue at position 319 (threonine 319) is a Phosphothreonine. Residues serine 321 and serine 360 each carry the phosphoserine modification. The PDZ 3 domain maps to 369-435 (DSRVVRFHKG…LTREEAVQFL (67 aa)). The SH3 domain maps to 464–538 (GDSFYIRTHF…PNQSRAEQLA (75 aa)). Residues 569–750 (LRRGAKKSTQ…WYQELKAVVR (182 aa)) form the Guanylate kinase-like domain. Residue serine 580 is modified to Phosphoserine. The disordered stretch occupies residues 759–898 (TAEDQLDNSS…GYDWGPATDL (140 aa)). Acidic residues predominate over residues 762-772 (DQLDNSSEDNL). A compositionally biased stretch (low complexity) spans 780 to 790 (ADSSADLSCDS). The span at 796-814 (YETDGEGYTDGEGYTDVDE) shows a compositional bias: acidic residues. Residues 831 to 841 (EEPRSPRDHGR) are compositionally biased toward basic and acidic residues. Residues serine 835, serine 884, and serine 885 each carry the phosphoserine modification.

Belongs to the MAGUK family. In terms of assembly, heterodimer with TJP1. Interacts with UBN1. Interacts with occludin OCLN and claudins. Interacts with PATJ. Interacts with FASLG. Interacts with CCND1. Post-translationally, phosphorylated.

It is found in the cell membrane. Its subcellular location is the cell junction. The protein localises to the tight junction. The protein resides in the nucleus. Its function is as follows. TJP1, TJP2, and TJP3 are closely related scaffolding proteins that link tight junction (TJ) transmembrane proteins such as claudins, junctional adhesion molecules, and occludin to the actin cytoskeleton. The tight junction acts to limit movement of substances through the paracellular space and as a boundary between the compositionally distinct apical and basolateral plasma membrane domains of epithelial and endothelial cells. Binds and recruits PATJ to tight junctions where it connects and stabilizes apical and lateral components of tight junctions. Promotes cell-cycle progression through the sequestration of cyclin D1 (CCND1) at tight junctions during mitosis which prevents CCND1 degradation during M-phase and enables S-phase transition. With TJP1 and TJP2, participates in the junctional retention and stability of the transcription factor DBPA, but is not involved in its shuttling to the nucleus. Contrary to TJP2, TJP3 is dispensable for individual viability, embryonic development, epithelial differentiation, and the establishment of TJs, at least in the laboratory environment. In Canis lupus familiaris (Dog), this protein is Tight junction protein ZO-3 (TJP3).